The following is a 357-amino-acid chain: UDP-N-acetylglucosamine--N-acetylmuramyl-(pentapeptide) pyrophosphoryl-undecaprenol N-acetylglucosamine transferase (357 aa).

Residues T13–G15, N125, R161, S189, I243, and Q288 each bind UDP-N-acetyl-alpha-D-glucosamine.

The protein belongs to the glycosyltransferase 28 family. MurG subfamily.

The protein resides in the cell inner membrane. It carries out the reaction di-trans,octa-cis-undecaprenyl diphospho-N-acetyl-alpha-D-muramoyl-L-alanyl-D-glutamyl-meso-2,6-diaminopimeloyl-D-alanyl-D-alanine + UDP-N-acetyl-alpha-D-glucosamine = di-trans,octa-cis-undecaprenyl diphospho-[N-acetyl-alpha-D-glucosaminyl-(1-&gt;4)]-N-acetyl-alpha-D-muramoyl-L-alanyl-D-glutamyl-meso-2,6-diaminopimeloyl-D-alanyl-D-alanine + UDP + H(+). Its pathway is cell wall biogenesis; peptidoglycan biosynthesis. Its function is as follows. Cell wall formation. Catalyzes the transfer of a GlcNAc subunit on undecaprenyl-pyrophosphoryl-MurNAc-pentapeptide (lipid intermediate I) to form undecaprenyl-pyrophosphoryl-MurNAc-(pentapeptide)GlcNAc (lipid intermediate II). The chain is UDP-N-acetylglucosamine--N-acetylmuramyl-(pentapeptide) pyrophosphoryl-undecaprenol N-acetylglucosamine transferase from Bordetella parapertussis (strain 12822 / ATCC BAA-587 / NCTC 13253).